A 500-amino-acid polypeptide reads, in one-letter code: Intracellular exo-alpha-(1-&gt;5)-L-arabinofuranosidase (500 aa).

The alpha-L-arabinofuranose site is built by Glu-28, Asn-73, and Asn-173. Residue Glu-174 is the Proton donor/acceptor of the active site. Alpha-L-arabinofuranose contacts are provided by Tyr-245, Glu-293, and Gln-350. Glu-293 acts as the Nucleophile in catalysis.

Belongs to the glycosyl hydrolase 51 family. Homohexamer; trimer of dimers.

Its subcellular location is the cytoplasm. It catalyses the reaction Hydrolysis of terminal non-reducing alpha-L-arabinofuranoside residues in alpha-L-arabinosides.. It functions in the pathway glycan metabolism; L-arabinan degradation. Its function is as follows. Involved in the degradation of arabinan and is a key enzyme in the complete degradation of the plant cell wall. Catalyzes the cleavage of terminal alpha-(1-&gt;5)-arabinofuranosyl bonds in different hemicellulosic homopolysaccharides (branched and debranched arabinans). The chain is Intracellular exo-alpha-(1-&gt;5)-L-arabinofuranosidase (abfA) from Halalkalibacterium halodurans (strain ATCC BAA-125 / DSM 18197 / FERM 7344 / JCM 9153 / C-125) (Bacillus halodurans).